A 210-amino-acid polypeptide reads, in one-letter code: 3-hexulose-6-phosphate synthase (210 aa).

The protein belongs to the HPS/KGPDC family. HPS subfamily.

The catalysed reaction is D-ribulose 5-phosphate + formaldehyde = D-arabino-hex-3-ulose 6-phosphate. The protein operates within one-carbon metabolism; formaldehyde assimilation via RuMP pathway; D-fructose 6-phosphate from D-ribulose 5-phosphate and formaldehyde: step 1/2. Its function is as follows. Catalyzes the condensation of ribulose 5-phosphate with formaldehyde to form 3-hexulose 6-phosphate. The sequence is that of 3-hexulose-6-phosphate synthase from Staphylococcus aureus (strain bovine RF122 / ET3-1).